Consider the following 222-residue polypeptide: MARVKRAVNAHKKRRVVLERAKGYRGQRSRLYRKAKEQLLHSFVYSYGDRRKKKGDFRRLWIQRINAASRANGLTYNRLIQGLKAAEVEVDRRMLAELAVSDANAFAALVNIAKAALPADTSAPAAAAAPKAAKVAPAAATATAVKAVVSEKPAIDGAVAADGDEAPEGYAIKGNAESKKYHVPGSTWYNTTAAEYWFSTVEAAKAAGFEPAGGEARQQIKN.

This sequence belongs to the bacterial ribosomal protein bL20 family.

Its function is as follows. Binds directly to 23S ribosomal RNA and is necessary for the in vitro assembly process of the 50S ribosomal subunit. It is not involved in the protein synthesizing functions of that subunit. The chain is Large ribosomal subunit protein bL20 (rplT) from Paenarthrobacter aurescens (strain TC1).